Here is a 551-residue protein sequence, read N- to C-terminus: 2,3-bisphosphoglycerate-independent phosphoglycerate mutase (551 aa).

2 residues coordinate Mn(2+): aspartate 22 and serine 74. The active-site Phosphoserine intermediate is serine 74. Substrate is bound by residues histidine 135, 165–166 (RD), arginine 201, arginine 208, and 281–284 (RGDR). Aspartate 319 contributes to the Mn(2+) binding site. Lysine 356 is a substrate binding site. 5 residues coordinate Mn(2+): aspartate 424, histidine 428, aspartate 465, histidine 466, and histidine 495.

It belongs to the BPG-independent phosphoglycerate mutase family. Monomer. Mn(2+) serves as cofactor.

It is found in the cytoplasm. It catalyses the reaction (2R)-2-phosphoglycerate = (2R)-3-phosphoglycerate. The protein operates within carbohydrate degradation; glycolysis; pyruvate from D-glyceraldehyde 3-phosphate: step 3/5. In terms of biological role, catalyzes the interconversion of 2-phosphoglycerate (2-PGA) and 3-phosphoglycerate (3-PGA). In Trypanosoma brucei brucei (strain 927/4 GUTat10.1), this protein is 2,3-bisphosphoglycerate-independent phosphoglycerate mutase.